Consider the following 282-residue polypeptide: Phosphatidylserine decarboxylase proenzyme (282 aa).

Active-site charge relay system; for autoendoproteolytic cleavage activity residues include Asp-85, His-142, and Ser-244. The active-site Schiff-base intermediate with substrate; via pyruvic acid; for decarboxylase activity is Ser-244. Ser-244 bears the Pyruvic acid (Ser); by autocatalysis mark.

Belongs to the phosphatidylserine decarboxylase family. PSD-B subfamily. Prokaryotic type I sub-subfamily. Heterodimer of a large membrane-associated beta subunit and a small pyruvoyl-containing alpha subunit. Pyruvate serves as cofactor. Post-translationally, is synthesized initially as an inactive proenzyme. Formation of the active enzyme involves a self-maturation process in which the active site pyruvoyl group is generated from an internal serine residue via an autocatalytic post-translational modification. Two non-identical subunits are generated from the proenzyme in this reaction, and the pyruvate is formed at the N-terminus of the alpha chain, which is derived from the carboxyl end of the proenzyme. The autoendoproteolytic cleavage occurs by a canonical serine protease mechanism, in which the side chain hydroxyl group of the serine supplies its oxygen atom to form the C-terminus of the beta chain, while the remainder of the serine residue undergoes an oxidative deamination to produce ammonia and the pyruvoyl prosthetic group on the alpha chain. During this reaction, the Ser that is part of the protease active site of the proenzyme becomes the pyruvoyl prosthetic group, which constitutes an essential element of the active site of the mature decarboxylase.

The protein resides in the cell membrane. It catalyses the reaction a 1,2-diacyl-sn-glycero-3-phospho-L-serine + H(+) = a 1,2-diacyl-sn-glycero-3-phosphoethanolamine + CO2. It participates in phospholipid metabolism; phosphatidylethanolamine biosynthesis; phosphatidylethanolamine from CDP-diacylglycerol: step 2/2. Its function is as follows. Catalyzes the formation of phosphatidylethanolamine (PtdEtn) from phosphatidylserine (PtdSer). The polypeptide is Phosphatidylserine decarboxylase proenzyme (Coxiella burnetii (strain CbuG_Q212) (Coxiella burnetii (strain Q212))).